The sequence spans 186 residues: MSKAPVNIVDRPLSKGKGEINISSFAFLFSEMIQYCQDRIKAGHELEKKLSDMGYSIGPRLLELLCVREKNSKRETKLLGILSFIHTTVWKSLFGKPADSLEKSTEADDEYMISDNNMVVNKFISLPKHLSSLNCAAFVAGIIEGILCSAEFPARVTAHNVAVEGKRFPKTVILIKFNPEVIERNA.

Belongs to the TRAPP small subunits family. BET3 subfamily. As to quaternary structure, part of the multisubunit TRAPP (transport protein particle) complex.

The protein localises to the golgi apparatus. It localises to the cis-Golgi network. Its subcellular location is the endoplasmic reticulum. In terms of biological role, may play a role in vesicular transport from endoplasmic reticulum to Golgi. The chain is Trafficking protein particle complex subunit 5 (trappc5) from Dictyostelium discoideum (Social amoeba).